The chain runs to 291 residues: Undecaprenyl-diphosphatase (291 aa).

8 helical membrane-spanning segments follow: residues 1–21 (MFIIELIKGIILGVVEGLTEF), 48–68 (SAFTFKIVIQLGSVFAAAWVF), 102–122 (LHVLVGMVPAGILGLLFDDFI), 126–146 (LFSVPTVMIGLFVGAIYMIIA), 162–182 (INYFQAFVIGISQAVAMWPGF), 203–223 (SDFTFIMAVPIMLAASGLSLL), 231–251 (IADIPFYILGFLAAFTVGLIA), and 267–287 (FAIYRIVLVIFIAILYFGFGI).

This sequence belongs to the UppP family.

It localises to the cell membrane. The catalysed reaction is di-trans,octa-cis-undecaprenyl diphosphate + H2O = di-trans,octa-cis-undecaprenyl phosphate + phosphate + H(+). Its function is as follows. Catalyzes the dephosphorylation of undecaprenyl diphosphate (UPP). Confers resistance to bacitracin. In Staphylococcus aureus (strain bovine RF122 / ET3-1), this protein is Undecaprenyl-diphosphatase.